A 315-amino-acid polypeptide reads, in one-letter code: G-box-binding factor 1 (315 aa).

2 disordered regions span residues 1 to 56 (MGTS…GSPS) and 93 to 268 (MPMP…RDEL). Over residues 46–56 (PFFPSPVGSPS) the composition is skewed to pro residues. Polar residues-rich tracts occupy residues 133–164 (GSGN…QEQG) and 178–187 (ASSQSTTGEI). In terms of domain architecture, bZIP spans 222 to 285 (ELKRQKRKQS…DKLKSENNSI (64 aa)). Positions 224–243 (KRQKRKQSNRESARRSRLRK) are basic motif. Over residues 249–262 (QLQQRVESLSNENQ) the composition is skewed to polar residues. The segment at 250–285 (LQQRVESLSNENQSLRDELQRLSSECDKLKSENNSI) is leucine-zipper.

This sequence belongs to the bZIP family. As to quaternary structure, monomer and heterodimers with BZIP16 and BZIP68. Interacts with GIP1. Phosphorylated by CK2. As to expression, found in both light and dark grown leaves.

It is found in the nucleus. Binds to the G-box motif (5'-CCACGTGG-3') of the rbcS-1A gene promoter. G-box and G-box-like motifs are cis-acting elements defined in promoters of certain plant genes which are regulated by such diverse stimuli as light-induction or hormone control. Binds to the G-box motif 5'-CACGTG-3' of LHCB2.4 (At3g27690) promoter. May act as transcriptional activator in light-regulated expression of LHCB2.4. Probably binds DNA as monomer. DNA-binding activity is redox-dependent. This is G-box-binding factor 1 (GBF1) from Arabidopsis thaliana (Mouse-ear cress).